Reading from the N-terminus, the 283-residue chain is Acetylglutamate kinase (283 aa).

Residues 63–64, R85, and N178 contribute to the substrate site; that span reads GG.

Belongs to the acetylglutamate kinase family. ArgB subfamily.

The protein localises to the cytoplasm. It carries out the reaction N-acetyl-L-glutamate + ATP = N-acetyl-L-glutamyl 5-phosphate + ADP. It functions in the pathway amino-acid biosynthesis; L-arginine biosynthesis; N(2)-acetyl-L-ornithine from L-glutamate: step 2/4. In terms of biological role, catalyzes the ATP-dependent phosphorylation of N-acetyl-L-glutamate. This Prochlorococcus marinus (strain MIT 9515) protein is Acetylglutamate kinase.